An 84-amino-acid polypeptide reads, in one-letter code: Small ribosomal subunit protein bS20 (84 aa).

Residues methionine 1–methionine 28 form a disordered region.

This sequence belongs to the bacterial ribosomal protein bS20 family.

Functionally, binds directly to 16S ribosomal RNA. The polypeptide is Small ribosomal subunit protein bS20 (Listeria monocytogenes serotype 4b (strain CLIP80459)).